The following is a 506-amino-acid chain: Radiation-sensitive protein 28 (506 aa).

WD repeat units lie at residues 55–94 (PLSI…HRND), 193–233 (HHKY…AVQD), 285–325 (RMQS…RLYS), 357–396 (AHLR…LQPE), and 404–451 (LGTQ…LWNK).

The protein localises to the nucleus. Functionally, involved in transcription-coupled repair nucleotide excision repair (NER) of UV-induced DNA lesions. The sequence is that of Radiation-sensitive protein 28 (RAD28) from Saccharomyces cerevisiae (strain ATCC 204508 / S288c) (Baker's yeast).